Here is a 783-residue protein sequence, read N- to C-terminus: MVRVKVNDRIVEVPPGTSVMDAVFHAGYDVPLFCSEKHLSPIGACRMCLVRIGLPKKGPDGKPLLNEKGEPEIQWQPKLAASCVTAVADGMVVDTLSDVVREAQAGMVEFTLLNHPLDCPTCDKGGACELQDRTVEYGLYEKYYQKGPLELPVYTRFEFTRRHVDKHHPLSPFVILDRERCIHCKRCVRYFEEVPGDEVLDFIERGVHTFIGTMDFGLPSGFSGNITDICPVGALLDLTARFRARNWEMEETPTTCALCPVGCGITADTRSGELLRIRAREVPEVNEIWICDAGRFGHEWADQNRLKTPLVRKEGRLVEATWEEAFLALKEGLKEARGEEVGLYLAHDATLEEGLLASELAKALKTPHLDFQGRTAAPASLFPPASLEDLLQADFALVLGDPTEEAPILHLRLSEFVRDLKPPHRYNHGTPFADLQIKERMPRRTDKMALFAPYRAPLMKWAAIHEVHRPGEEREILLALLGDKEGSEMVAKAKEAWEKAKNPVLILGAGVLQDTVAAERARLLAERKGAKVLAMTPAANARGLEAMGVLPGAKGASWDEPGALYAYYGFVPPEEALKGKRFVVMHLSHLHPLAERYAHVVLPAPTFYEKRGHLVNLEGRVLPLSPAPIENGEAEGALQVLALLAEALGVRPPFRLHLEAQKALKARKVPEAMGRLSFRLKELRPKERKGAFYLRPTMWKAHQAVGKAQEAARAELWAHPETARAEALPEGAQVAVETPFGRVEARVVHREDVPKGHLYLSALGPAAGLRVEGRVLVPAGGEA.

Residues 1–99 (MVRVKVNDRI…GMVVDTLSDV (99 aa)) form the 2Fe-2S ferredoxin-type domain. [2Fe-2S] cluster is bound by residues Cys-34, Cys-45, Cys-48, and Cys-83. In terms of domain architecture, 4Fe-4S His(Cys)3-ligated-type spans 99-138 (VVREAQAGMVEFTLLNHPLDCPTCDKGGACELQDRTVEYG). His-115, Cys-119, Cys-122, Cys-128, Cys-181, Cys-184, Cys-187, Cys-230, Cys-256, Cys-259, Cys-263, and Cys-291 together coordinate [4Fe-4S] cluster. Residues 249-305 (MEETPTTCALCPVGCGITADTRSGELLRIRAREVPEVNEIWICDAGRFGHEWADQNR) enclose the 4Fe-4S Mo/W bis-MGD-type domain.

Belongs to the complex I 75 kDa subunit family. NDH-1 is composed of 15 different subunits, Nqo1 to Nqo15. The complex has a L-shaped structure, with the hydrophobic arm (subunits Nqo7, Nqo8 and Nqo10 to Nqo14) embedded in the membrane and the hydrophilic peripheral arm (subunits Nqo1 to Nqo6, Nqo9 and Nqo15) protruding into the bacterial cytoplasm. The hydrophilic domain contains all the redox centers. [2Fe-2S] cluster serves as cofactor. Requires [4Fe-4S] cluster as cofactor.

The protein localises to the cell membrane. The enzyme catalyses a quinone + NADH + 5 H(+)(in) = a quinol + NAD(+) + 4 H(+)(out). NDH-1 shuttles electrons from NADH, via FMN and iron-sulfur (Fe-S) centers, to quinones in the respiratory chain. The immediate electron acceptor for the enzyme in this species is menaquinone. Couples the redox reaction to proton translocation (for every two electrons transferred, four hydrogen ions are translocated across the cytoplasmic membrane), and thus conserves the redox energy in a proton gradient required for the synthesis of ATP. The protein is NADH-quinone oxidoreductase subunit 3 (nqo3) of Thermus thermophilus (strain ATCC 27634 / DSM 579 / HB8).